The chain runs to 197 residues: Probable GTP-binding protein EngB (197 aa).

Residues 25–197 (SAPEIAFAGR…VRDEFFKFTR (173 aa)) form the EngB-type G domain. Residues 33–40 (GRSNVGKS), 60–64 (GCTRQ), 79–82 (DLPG), 146–149 (TKID), and 177–179 (ISV) each bind GTP. Residues S40 and T62 each contribute to the Mg(2+) site.

It belongs to the TRAFAC class TrmE-Era-EngA-EngB-Septin-like GTPase superfamily. EngB GTPase family. Requires Mg(2+) as cofactor.

Necessary for normal cell division and for the maintenance of normal septation. This is Probable GTP-binding protein EngB from Wolbachia sp. subsp. Brugia malayi (strain TRS).